We begin with the raw amino-acid sequence, 322 residues long: Ferredoxin--NADP reductase (322 aa).

FAD contacts are provided by E37, Q45, Y50, I91, F128, and D290.

This sequence belongs to the ferredoxin--NADP reductase type 2 family. Homodimer. It depends on FAD as a cofactor.

The catalysed reaction is 2 reduced [2Fe-2S]-[ferredoxin] + NADP(+) + H(+) = 2 oxidized [2Fe-2S]-[ferredoxin] + NADPH. In Malacoplasma penetrans (strain HF-2) (Mycoplasma penetrans), this protein is Ferredoxin--NADP reductase.